A 65-amino-acid polypeptide reads, in one-letter code: MNAPLDRPANSVDPKLLEILVCPMTKGPLEYDAAKQELISRSAKLAYPIRDGIPIMLPEEARKIG.

The protein belongs to the UPF0434 family.

In Bradyrhizobium sp. (strain BTAi1 / ATCC BAA-1182), this protein is UPF0434 protein BBta_0300.